A 290-amino-acid polypeptide reads, in one-letter code: Ribosomal RNA small subunit methyltransferase A (290 aa).

Positions 27, 29, 54, 75, 100, and 125 each coordinate S-adenosyl-L-methionine.

Belongs to the class I-like SAM-binding methyltransferase superfamily. rRNA adenine N(6)-methyltransferase family. RsmA subfamily.

The protein localises to the cytoplasm. The enzyme catalyses adenosine(1518)/adenosine(1519) in 16S rRNA + 4 S-adenosyl-L-methionine = N(6)-dimethyladenosine(1518)/N(6)-dimethyladenosine(1519) in 16S rRNA + 4 S-adenosyl-L-homocysteine + 4 H(+). Its function is as follows. Specifically dimethylates two adjacent adenosines (A1518 and A1519) in the loop of a conserved hairpin near the 3'-end of 16S rRNA in the 30S particle. May play a critical role in biogenesis of 30S subunits. The sequence is that of Ribosomal RNA small subunit methyltransferase A from Streptococcus pyogenes serotype M1.